A 713-amino-acid chain; its full sequence is MNPIVKQFKYGQHTVTLETGAIARQATAAVMASMDDTSVFVTVVAKKDVKEGQDFFPLTVNYQERTYAAGRIPGGFFKREGRPSEGETLIARLIDRPIRPLFPEGFFNEIQIIATVVSVNPQISPDLVAMIGASAALSLSGVPFNGPIGAARVGFINDQFVLNPTMNEQKQSRLDLVVAGTDKAVLMVESEADILTEEQMLAAVVFGHQQQQIVIEAIKEFAAEAGKPRWDWTAPEANTILIEKVKSIAENRLGDAYRITEKQARYEQIDLIKADVITQVTAEDETISEGKIIDIFTALESQIVRGRILRGEPRIDGRTVDTVRALDICTGVLPRTHGSAIFTRGETQALAVATLGTERDAQIIDELTGEKTDHFLFHYNFPPYSVGETGMIGSPKRREIGHGRLAKRGVAAVMPSLSEFPYVVRVVSEITESNGSSSMASVCGASLALMDAGVPIKAAVAGIAMGLVKEEDNFVVLSDILGDEDHLGDMDFKVAGTREGVTALQMDIKIEGITAEIMQIALNQAKSARMHILGVMEQAIPAPRADISDFAPRIYTMKIDPKKIKDVIGKGGATVRSLTEETGTSIDIDDDGTVKIAAVDKNAVQEVMSRIEDITAEVEVGVVYKGKVTRLADFGAFVALVGNKEGLVHISQIAEERVEKVSDYLAIGQEVIVKVLEIDRQGRIRLTMKELAKDQTKNEENLLQSEEGSPVQE.

D485 and D491 together coordinate Mg(2+). Residues 552 to 611 (PRIYTMKIDPKKIKDVIGKGGATVRSLTEETGTSIDIDDDGTVKIAAVDKNAVQEVMSRI) form the KH domain. The region spanning 621 to 689 (GVVYKGKVTR…RQGRIRLTMK (69 aa)) is the S1 motif domain. The disordered stretch occupies residues 694-713 (DQTKNEENLLQSEEGSPVQE). Residues 701 to 713 (NLLQSEEGSPVQE) show a composition bias toward polar residues.

It belongs to the polyribonucleotide nucleotidyltransferase family. As to quaternary structure, component of the RNA degradosome, which is a multiprotein complex involved in RNA processing and mRNA degradation. Mg(2+) serves as cofactor.

It localises to the cytoplasm. The enzyme catalyses RNA(n+1) + phosphate = RNA(n) + a ribonucleoside 5'-diphosphate. Functionally, involved in mRNA degradation. Catalyzes the phosphorolysis of single-stranded polyribonucleotides processively in the 3'- to 5'-direction. This is Polyribonucleotide nucleotidyltransferase from Histophilus somni (strain 2336) (Haemophilus somnus).